The following is an 86-amino-acid chain: U15-lycotoxin-Ls1c (86 aa).

Residues 1–20 (MNSKIFAVLLLLAFLSCVLS) form the signal peptide. A WAP domain is found at 21–66 (DQYCPKSSITACKKMNIRNDCCKDDDCTGGSWCCATPCGNICKYPT). 5 cysteine pairs are disulfide-bonded: cysteine 24–cysteine 54, cysteine 32–cysteine 58, cysteine 41–cysteine 53, cysteine 42–cysteine 80, and cysteine 47–cysteine 62.

Belongs to the venom protein 11 family. 01 (wap-1) subfamily. Post-translationally, contains 5 disulfide bonds. In terms of tissue distribution, expressed by the venom gland.

Its subcellular location is the secreted. Functionally, has antibacterial activity. The chain is U15-lycotoxin-Ls1c from Lycosa singoriensis (Wolf spider).